A 96-amino-acid polypeptide reads, in one-letter code: Small ribosomal subunit protein bS6 (96 aa).

This sequence belongs to the bacterial ribosomal protein bS6 family.

Its function is as follows. Binds together with bS18 to 16S ribosomal RNA. The chain is Small ribosomal subunit protein bS6 from Streptococcus pyogenes serotype M1.